A 400-amino-acid polypeptide reads, in one-letter code: Zinc finger protein 514 (400 aa).

The 72-residue stretch at 1 to 72 (MTFEDVAVEF…EREISTGAHS (72 aa)) folds into the KRAB domain. 7 consecutive C2H2-type zinc fingers follow at residues 204 to 226 (CKCNECGKSFHFQSELRRHQRCH), 232 to 254 (YECSDCGRAFGHISSLIKHQRTH), 260 to 282 (YECSECGRAFSQSSSLVLHYRFH), 288 to 310 (YKCNECGRAFGHTSSLIKHQRTH), 316 to 338 (YECRECGRTFSQSSSLIVHYRFH), 344 to 366 (YKCNKCGRAFSQSSSLTQHYRFH), and 372 to 394 (YKCNECGRAFAHTASLIKHQRSH).

The protein belongs to the krueppel C2H2-type zinc-finger protein family.

It is found in the nucleus. May be involved in transcriptional regulation. The sequence is that of Zinc finger protein 514 (ZNF514) from Homo sapiens (Human).